The sequence spans 169 residues: Myosin regulatory light chain 2, skeletal muscle isoform A (169 aa).

Ser21 is modified (phosphoserine). 3 consecutive EF-hand domains span residues Ser26 to Leu61, Asp96 to Arg131, and Phe132 to Lys167. Residues Asp39, Asn41, Asp43, and Asp50 each contribute to the Ca(2+) site.

In terms of assembly, myosin is a hexamer of 2 heavy chains and 4 light chains. Interacts with nanos3; the interaction negatively regulates mylpfa phosphorylation.

Myosin regulatory subunit that plays a role to maintain muscle integrity during early development. Plays a role in muscle contraction. This Danio rerio (Zebrafish) protein is Myosin regulatory light chain 2, skeletal muscle isoform A (mylpfa).